We begin with the raw amino-acid sequence, 339 residues long: Undecaprenyl-phosphate 4-deoxy-4-formamido-L-arabinose transferase (339 aa).

2 consecutive transmembrane segments (helical) span residues 235-255 and 270-290; these read LSII…MLIV and FVLF…MGLL.

Belongs to the glycosyltransferase 2 family.

Its subcellular location is the cell inner membrane. The enzyme catalyses UDP-4-deoxy-4-formamido-beta-L-arabinose + di-trans,octa-cis-undecaprenyl phosphate = 4-deoxy-4-formamido-alpha-L-arabinopyranosyl di-trans,octa-cis-undecaprenyl phosphate + UDP. It participates in glycolipid biosynthesis; 4-amino-4-deoxy-alpha-L-arabinose undecaprenyl phosphate biosynthesis; 4-amino-4-deoxy-alpha-L-arabinose undecaprenyl phosphate from UDP-4-deoxy-4-formamido-beta-L-arabinose and undecaprenyl phosphate: step 1/2. Its pathway is bacterial outer membrane biogenesis; lipopolysaccharide biosynthesis. Catalyzes the transfer of 4-deoxy-4-formamido-L-arabinose from UDP to undecaprenyl phosphate. The modified arabinose is attached to lipid A and is required for resistance to polymyxin and cationic antimicrobial peptides. This is Undecaprenyl-phosphate 4-deoxy-4-formamido-L-arabinose transferase from Pseudomonas fluorescens (strain ATCC BAA-477 / NRRL B-23932 / Pf-5).